We begin with the raw amino-acid sequence, 529 residues long: Peptide chain release factor 3 (529 aa).

Positions 11–280 (KKRRTFAIIS…GLVEWAPAPL (270 aa)) constitute a tr-type G domain. GTP is bound by residues 20–27 (SHPDAGKT), 88–92 (DTPGH), and 142–145 (NKLD).

It belongs to the TRAFAC class translation factor GTPase superfamily. Classic translation factor GTPase family. PrfC subfamily.

The protein localises to the cytoplasm. Functionally, increases the formation of ribosomal termination complexes and stimulates activities of RF-1 and RF-2. It binds guanine nucleotides and has strong preference for UGA stop codons. It may interact directly with the ribosome. The stimulation of RF-1 and RF-2 is significantly reduced by GTP and GDP, but not by GMP. This is Peptide chain release factor 3 from Alteromonas mediterranea (strain DSM 17117 / CIP 110805 / LMG 28347 / Deep ecotype).